The chain runs to 245 residues: 2,3-bisphosphoglycerate-dependent phosphoglycerate mutase (245 aa).

Substrate is bound by residues arginine 8–asparagine 15, threonine 21–glycine 22, arginine 60, glutamate 87–tyrosine 90, lysine 98, arginine 114–arginine 115, and glycine 183–asparagine 184. Histidine 9 (tele-phosphohistidine intermediate) is an active-site residue. The active-site Proton donor/acceptor is glutamate 87.

Belongs to the phosphoglycerate mutase family. BPG-dependent PGAM subfamily.

It carries out the reaction (2R)-2-phosphoglycerate = (2R)-3-phosphoglycerate. Its pathway is carbohydrate degradation; glycolysis; pyruvate from D-glyceraldehyde 3-phosphate: step 3/5. In terms of biological role, catalyzes the interconversion of 2-phosphoglycerate and 3-phosphoglycerate. The polypeptide is 2,3-bisphosphoglycerate-dependent phosphoglycerate mutase (Bacillus mycoides (strain KBAB4) (Bacillus weihenstephanensis)).